Reading from the N-terminus, the 341-residue chain is Mitochondrial transcription factor 1 (341 aa).

S-adenosyl-L-methionine is bound by residues Leu23, Glu77, Asp101, and Asn137.

It belongs to the class I-like SAM-binding methyltransferase superfamily. rRNA adenine N(6)-methyltransferase family.

It localises to the mitochondrion intermembrane space. Functionally, mitochondrial transcription factor that confers selective promoter recognition on the core subunit of the yeast mitochondrial RNA polymerase. Interacts with DNA in a non-specific manner. The sequence is that of Mitochondrial transcription factor 1 (MTF1) from Saccharomyces cerevisiae (strain ATCC 204508 / S288c) (Baker's yeast).